The chain runs to 456 residues: Exodeoxyribonuclease 7 large subunit (456 aa).

The protein belongs to the XseA family. As to quaternary structure, heterooligomer composed of large and small subunits.

The protein resides in the cytoplasm. It catalyses the reaction Exonucleolytic cleavage in either 5'- to 3'- or 3'- to 5'-direction to yield nucleoside 5'-phosphates.. Functionally, bidirectionally degrades single-stranded DNA into large acid-insoluble oligonucleotides, which are then degraded further into small acid-soluble oligonucleotides. The sequence is that of Exodeoxyribonuclease 7 large subunit from Escherichia coli O157:H7.